The primary structure comprises 427 residues: A-adding tRNA nucleotidyltransferase (427 aa).

49 to 52 (GTVR) is an ATP binding site. The Mg(2+) site is built by aspartate 62 and aspartate 64. Residues 136–137 (RD), asparagine 141, 181–190 (DPTRLLRGVR), arginine 194, and arginine 225 contribute to the ATP site.

Belongs to the tRNA nucleotidyltransferase/poly(A) polymerase family. Mg(2+) is required as a cofactor.

The enzyme catalyses a tRNA with a 3' CC end + ATP = a tRNA with a 3' CCA end + diphosphate. In terms of biological role, tRNA nucleotidyltransferase involved in the synthesis of the tRNA CCA terminus. Adds the terminal adenosine residue to tRNA. This chain is A-adding tRNA nucleotidyltransferase, found in Halalkalibacterium halodurans (strain ATCC BAA-125 / DSM 18197 / FERM 7344 / JCM 9153 / C-125) (Bacillus halodurans).